Here is a 633-residue protein sequence, read N- to C-terminus: DNA-directed RNA polymerase subunit gamma (633 aa).

Zn(2+) contacts are provided by Cys-74, Cys-76, Cys-89, and Cys-92. Mg(2+) contacts are provided by Asp-471, Asp-473, and Asp-475.

This sequence belongs to the RNA polymerase beta' chain family. RpoC1 subfamily. As to quaternary structure, in cyanobacteria the RNAP catalytic core is composed of 2 alpha, 1 beta, 1 beta', 1 gamma and 1 omega subunit. When a sigma factor is associated with the core the holoenzyme is formed, which can initiate transcription. Requires Mg(2+) as cofactor. Zn(2+) serves as cofactor.

The catalysed reaction is RNA(n) + a ribonucleoside 5'-triphosphate = RNA(n+1) + diphosphate. Its function is as follows. DNA-dependent RNA polymerase catalyzes the transcription of DNA into RNA using the four ribonucleoside triphosphates as substrates. The protein is DNA-directed RNA polymerase subunit gamma of Prochlorococcus marinus (strain MIT 9211).